A 266-amino-acid chain; its full sequence is MAAVPELTSEMMAYSSNNENDLFFEADGPGNDVKCCCQDLNHSSLVDEGIQLQVSHQLCNKSLRHFVSVIVALEKLKKPCPQVLQEDDLKSIFCYIFEEEPIICKTDADNFMSDAAMQSVDCKLQDISHKYLVLSNSYELRALHLNGENVNKQVVFHMSFVHGDESNNKIPVVLGIKQKNLYLSCVMKDGKPTLQLEKVDPKVYPKRKMEKRFVFNKIEIKNTVEFESSQYPNWYISTSQVEGMPVFLGNTRGGQDITDFTMEFSS.

Positions 1-114 (MAAVPELTSE…KTDADNFMSD (114 aa)) are excised as a propeptide.

Belongs to the IL-1 family. As to quaternary structure, monomer. In its precursor form, weakly interacts with full-length MEFV; the mature cytokine does not interact at all. Interacts with integrins ITGAV:ITGBV and ITGA5:ITGB1; integrin-binding is required for IL1B signaling. Interacts with cargo receptor TMED10; the interaction is direct and is required for the secretion of IL1B mature form. Interacts with HSP90AB1; the interaction facilitates cargo translocation into the ERGIC. Interacts with HSP90B1; the interaction facilitates cargo translocation into the ERGIC.

The protein resides in the cytoplasm. It is found in the cytosol. It localises to the secreted. The protein localises to the lysosome. Its subcellular location is the extracellular exosome. Potent pro-inflammatory cytokine. Initially discovered as the major endogenous pyrogen, induces prostaglandin synthesis, neutrophil influx and activation, T-cell activation and cytokine production, B-cell activation and antibody production, and fibroblast proliferation and collagen production. Promotes Th17 differentiation of T-cells. Synergizes with IL12/interleukin-12 to induce IFNG synthesis from T-helper 1 (Th1) cells. Plays a role in angiogenesis by inducing VEGF production synergistically with TNF and IL6. Involved in transduction of inflammation downstream of pyroptosis: its mature form is specifically released in the extracellular milieu by passing through the gasdermin-D (GSDMD) pore. The chain is Interleukin-1 beta (IL1B) from Canis lupus familiaris (Dog).